Consider the following 292-residue polypeptide: 11-beta-hydroxysteroid dehydrogenase 1 (292 aa).

Residues 1–7 (MAFMKKY) are Cytoplasmic-facing. The helical; Signal-anchor for type II membrane protein transmembrane segment at 8–24 (LLPILGIFLAYYYYSAN) threads the bilayer. Topologically, residues 25–292 (EEFRPEMLRG…KYNMERFINN (268 aa)) are lumenal. Residues 41–67 (GASKGIGREMAYHLARMGAHVVVTARS) and 92–93 (TM) each bind NADP(+). Asparagine 95 carries an N-linked (GlcNAc...) asparagine glycan. NADP(+) is bound at residue 119–121 (NHI). Serine 170 contacts substrate. The Proton acceptor role is filled by tyrosine 183. Residue 183 to 187 (YSASK) coordinates NADP(+). Residue asparagine 207 is glycosylated (N-linked (GlcNAc...) asparagine). Residues 216–222 (GLIDTDT) and 218–222 (IDTDT) contribute to the NADP(+) site.

It belongs to the short-chain dehydrogenases/reductases (SDR) family. As to quaternary structure, homodimer. As to expression, liver, kidney, lung, hypothalamus, anterior pituitary and placenta.

It is found in the endoplasmic reticulum membrane. The catalysed reaction is an 11beta-hydroxysteroid + NADP(+) = an 11-oxosteroid + NADPH + H(+). The enzyme catalyses corticosterone + NADP(+) = 11-dehydrocorticosterone + NADPH + H(+). It carries out the reaction cortisone + NADPH + H(+) = cortisol + NADP(+). It catalyses the reaction a 7beta-hydroxysteroid + NADP(+) = a 7-oxosteroid + NADPH + H(+). The catalysed reaction is 7-oxocholesterol + NADPH + H(+) = 7beta-hydroxycholesterol + NADP(+). The enzyme catalyses chenodeoxycholate + NADP(+) = 7-oxolithocholate + NADPH + H(+). It carries out the reaction 7-oxolithocholate + NADPH + H(+) = ursodeoxycholate + NADP(+). It catalyses the reaction glycochenodeoxycholate + NADP(+) = 7-oxoglycolithocholate + NADPH + H(+). The catalysed reaction is taurochenodeoxycholate + NADP(+) = 7-oxotaurolithocholate + NADPH + H(+). The enzyme catalyses tauroursodeoxycholate + NADP(+) = 7-oxotaurolithocholate + NADPH + H(+). It carries out the reaction glycoursodeoxycholate + NADP(+) = 7-oxoglycolithocholate + NADPH + H(+). It catalyses the reaction 7-oxopregnenolone + NADPH + H(+) = 7beta-hydroxypregnenolone + NADP(+). The catalysed reaction is 3beta,7alpha-dihydroxyandrost-5-en-17-one + NADP(+) = 3beta-hydroxy-5-androstene-7,17-dione + NADPH + H(+). The enzyme catalyses 3beta-hydroxy-5-androstene-7,17-dione + NADPH + H(+) = 3beta,7beta-dihydroxyandrost-5-en-17-one + NADP(+). It carries out the reaction 3beta-hydroxy-5alpha-androstane-7,17-dione + NADPH + H(+) = 3beta,7beta-dihydroxy-5alpha-androstan-17-one + NADP(+). In terms of biological role, controls the reversible conversion of biologically active glucocorticoids such as cortisone to cortisol, and 11-dehydrocorticosterone to corticosterone in the presence of NADP(H). Participates in the corticosteroid receptor-mediated anti-inflammatory response, as well as metabolic and homeostatic processes. Plays a role in the secretion of aqueous humor in the eye, maintaining a normotensive, intraocular environment. Bidirectional in vitro, predominantly functions as a reductase in vivo, thereby increasing the concentration of active glucocorticoids. It has broad substrate specificity, besides glucocorticoids, it accepts other steroid and sterol substrates. Interconverts 7-oxo- and 7-hydroxy-neurosteroids such as 7-oxopregnenolone and 7beta-hydroxypregnenolone, 7-oxodehydroepiandrosterone (3beta-hydroxy-5-androstene-7,17-dione) and 7beta-hydroxydehydroepiandrosterone (3beta,7beta-dihydroxyandrost-5-en-17-one), among others. Catalyzes the stereo-specific conversion of the major dietary oxysterol, 7-ketocholesterol (7-oxocholesterol), into the more polar 7-beta-hydroxycholesterol metabolite. 7-oxocholesterol is one of the most important oxysterols, it participates in several events such as induction of apoptosis, accumulation in atherosclerotic lesions, lipid peroxidation, and induction of foam cell formation. Mediates the 7-oxo reduction of 7-oxolithocholate mainly to chenodeoxycholate, and to a lesser extent to ursodeoxycholate, both in its free form and when conjugated to glycine or taurine, providing a link between glucocorticoid activation and bile acid metabolism. Catalyzes the synthesis of 7-beta-25-dihydroxycholesterol from 7-oxo-25-hydroxycholesterol in vitro, which acts as a ligand for the G-protein-coupled receptor (GPCR) Epstein-Barr virus-induced gene 2 (EBI2) and may thereby regulate immune cell migration. In Ovis aries (Sheep), this protein is 11-beta-hydroxysteroid dehydrogenase 1 (HSD11B1).